The following is a 454-amino-acid chain: Serine--tRNA ligase (454 aa).

247–249 (TAE) is a binding site for L-serine. ATP contacts are provided by residues 278-280 (RKE) and V294. E301 contributes to the L-serine binding site. Position 365-368 (365-368 (ELAS)) interacts with ATP. Residue T400 coordinates L-serine.

The protein belongs to the class-II aminoacyl-tRNA synthetase family. Type-1 seryl-tRNA synthetase subfamily. As to quaternary structure, homodimer. The tRNA molecule binds across the dimer.

The protein resides in the cytoplasm. It carries out the reaction tRNA(Ser) + L-serine + ATP = L-seryl-tRNA(Ser) + AMP + diphosphate + H(+). The enzyme catalyses tRNA(Sec) + L-serine + ATP = L-seryl-tRNA(Sec) + AMP + diphosphate + H(+). The protein operates within aminoacyl-tRNA biosynthesis; selenocysteinyl-tRNA(Sec) biosynthesis; L-seryl-tRNA(Sec) from L-serine and tRNA(Sec): step 1/1. Functionally, catalyzes the attachment of serine to tRNA(Ser). Is also able to aminoacylate tRNA(Sec) with serine, to form the misacylated tRNA L-seryl-tRNA(Sec), which will be further converted into selenocysteinyl-tRNA(Sec). This chain is Serine--tRNA ligase, found in Pyrobaculum calidifontis (strain DSM 21063 / JCM 11548 / VA1).